Here is a 295-residue protein sequence, read N- to C-terminus: Ethanolamine ammonia-lyase small subunit (295 aa).

3 residues coordinate adenosylcob(III)alamin: V207, E228, and C258.

Belongs to the EutC family. As to quaternary structure, the basic unit is a heterodimer which dimerizes to form tetramers. The heterotetramers trimerize; 6 large subunits form a core ring with 6 small subunits projecting outwards. Requires adenosylcob(III)alamin as cofactor.

It is found in the bacterial microcompartment. It carries out the reaction ethanolamine = acetaldehyde + NH4(+). The protein operates within amine and polyamine degradation; ethanolamine degradation. Catalyzes the deamination of various vicinal amino-alcohols to oxo compounds. Allows this organism to utilize ethanolamine as the sole source of nitrogen and carbon in the presence of external vitamin B12. The sequence is that of Ethanolamine ammonia-lyase small subunit from Escherichia coli O139:H28 (strain E24377A / ETEC).